The chain runs to 776 residues: DNA topoisomerase 1 (776 aa).

The Toprim domain maps to 1–111 (MKLVIVESPA…VESDDFFKRV (111 aa)). Mg(2+) contacts are provided by E7 and D80. One can recognise a Topo IA-type catalytic domain in the interval 132–568 (DTNLVNAQQA…FWRGFNHNIE (437 aa)). Positions 166–171 (SAGRVQ) are interaction with DNA. Residue Y304 is the O-(5'-phospho-DNA)-tyrosine intermediate of the active site. The C4-type zinc-finger motif lies at 600 to 627 (CPSCKTGQLSLKLGKFGAFLACSNYPEC).

It belongs to the type IA topoisomerase family. Monomer. Mg(2+) serves as cofactor.

It catalyses the reaction ATP-independent breakage of single-stranded DNA, followed by passage and rejoining.. In terms of biological role, releases the supercoiling and torsional tension of DNA, which is introduced during the DNA replication and transcription, by transiently cleaving and rejoining one strand of the DNA duplex. Introduces a single-strand break via transesterification at a target site in duplex DNA. The scissile phosphodiester is attacked by the catalytic tyrosine of the enzyme, resulting in the formation of a DNA-(5'-phosphotyrosyl)-enzyme intermediate and the expulsion of a 3'-OH DNA strand. The free DNA strand then undergoes passage around the unbroken strand, thus removing DNA supercoils. Finally, in the religation step, the DNA 3'-OH attacks the covalent intermediate to expel the active-site tyrosine and restore the DNA phosphodiester backbone. The polypeptide is DNA topoisomerase 1 (Rickettsia prowazekii (strain Madrid E)).